Here is a 485-residue protein sequence, read N- to C-terminus: tRNA sulfurtransferase (485 aa).

One can recognise a THUMP domain in the interval 61-165; sequence EELIALLQRI…DDKMMLVKAR (105 aa). ATP contacts are provided by residues 183 to 184, K265, G287, and Q296; that span reads LI. Residues C344 and C456 are joined by a disulfide bond. A Rhodanese domain is found at 404-483; that stretch reads LGENEVILDI…FSNVRVFAKN (80 aa). C456 functions as the Cysteine persulfide intermediate in the catalytic mechanism.

This sequence belongs to the ThiI family.

It is found in the cytoplasm. The catalysed reaction is [ThiI sulfur-carrier protein]-S-sulfanyl-L-cysteine + a uridine in tRNA + 2 reduced [2Fe-2S]-[ferredoxin] + ATP + H(+) = [ThiI sulfur-carrier protein]-L-cysteine + a 4-thiouridine in tRNA + 2 oxidized [2Fe-2S]-[ferredoxin] + AMP + diphosphate. It catalyses the reaction [ThiS sulfur-carrier protein]-C-terminal Gly-Gly-AMP + S-sulfanyl-L-cysteinyl-[cysteine desulfurase] + AH2 = [ThiS sulfur-carrier protein]-C-terminal-Gly-aminoethanethioate + L-cysteinyl-[cysteine desulfurase] + A + AMP + 2 H(+). It functions in the pathway cofactor biosynthesis; thiamine diphosphate biosynthesis. Its function is as follows. Catalyzes the ATP-dependent transfer of a sulfur to tRNA to produce 4-thiouridine in position 8 of tRNAs, which functions as a near-UV photosensor. Also catalyzes the transfer of sulfur to the sulfur carrier protein ThiS, forming ThiS-thiocarboxylate. This is a step in the synthesis of thiazole, in the thiamine biosynthesis pathway. The sulfur is donated as persulfide by IscS. In Haemophilus influenzae (strain PittGG), this protein is tRNA sulfurtransferase.